Here is a 275-residue protein sequence, read N- to C-terminus: Urease accessory protein UreD (275 aa).

Belongs to the UreD family. UreD, UreF and UreG form a complex that acts as a GTP-hydrolysis-dependent molecular chaperone, activating the urease apoprotein by helping to assemble the nickel containing metallocenter of UreC. The UreE protein probably delivers the nickel.

It localises to the cytoplasm. In terms of biological role, required for maturation of urease via the functional incorporation of the urease nickel metallocenter. In Cereibacter sphaeroides (strain ATCC 17029 / ATH 2.4.9) (Rhodobacter sphaeroides), this protein is Urease accessory protein UreD.